Reading from the N-terminus, the 32-residue chain is Cytochrome b6-f complex subunit 7 (32 aa).

A helical transmembrane segment spans residues 9-27; it reads AAVFWILIPIGLVGGALLL.

Belongs to the PetM family. As to quaternary structure, the 4 large subunits of the cytochrome b6-f complex are cytochrome b6, subunit IV (17 kDa polypeptide, PetD), cytochrome f and the Rieske protein, while the 4 small subunits are PetG, PetL, PetM and PetN. The complex functions as a dimer.

Its subcellular location is the cellular thylakoid membrane. In terms of biological role, component of the cytochrome b6-f complex, which mediates electron transfer between photosystem II (PSII) and photosystem I (PSI), cyclic electron flow around PSI, and state transitions. The sequence is that of Cytochrome b6-f complex subunit 7 from Prochlorococcus marinus (strain MIT 9515).